A 497-amino-acid chain; its full sequence is Taxane 10-beta-hydroxylase (497 aa).

A heme-binding site is contributed by C443.

This sequence belongs to the cytochrome P450 family. The cofactor is heme.

It catalyses the reaction taxa-4(20),11-dien-5alpha-yl acetate + reduced [NADPH--hemoprotein reductase] + O2 = 10beta-hydroxytaxa-4(20),11-dien-5alpha-yl acetate + oxidized [NADPH--hemoprotein reductase] + H2O + H(+). Its pathway is alkaloid biosynthesis; taxol biosynthesis; 10-deacetyl-2-debenzoylbaccatin III from taxa-4(20),11-dien-5alpha-ol: step 2/3. Involved in the transformation of a taxadienyl acetate by hydroxylation at C10 to yield taxadien-5-alpha-acetoxy-10-beta-ol. This chain is Taxane 10-beta-hydroxylase (CYP725A1), found in Taxus cuspidata (Japanese yew).